The chain runs to 407 residues: Na(+)-translocating NADH-quinone reductase subunit F (407 aa).

Residues 4–24 (IILGVFFFTAIVVALVFVILG) traverse the membrane as a helical segment. Residues 33–125 (GNVEVLINGE…NMKIHVHEEV (93 aa)) enclose the 2Fe-2S ferredoxin-type domain. Residues Cys-68, Cys-74, Cys-77, and Cys-109 each contribute to the [2Fe-2S] cluster site. The region spanning 128-269 (VKKWECTVRS…SGPFGEFFAR (142 aa)) is the FAD-binding FR-type domain.

The protein belongs to the NqrF family. Composed of six subunits; NqrA, NqrB, NqrC, NqrD, NqrE and NqrF. Requires [2Fe-2S] cluster as cofactor. FAD is required as a cofactor.

It is found in the cell inner membrane. It carries out the reaction a ubiquinone + n Na(+)(in) + NADH + H(+) = a ubiquinol + n Na(+)(out) + NAD(+). NQR complex catalyzes the reduction of ubiquinone-1 to ubiquinol by two successive reactions, coupled with the transport of Na(+) ions from the cytoplasm to the periplasm. The first step is catalyzed by NqrF, which accepts electrons from NADH and reduces ubiquinone-1 to ubisemiquinone by a one-electron transfer pathway. In Methylococcus capsulatus (strain ATCC 33009 / NCIMB 11132 / Bath), this protein is Na(+)-translocating NADH-quinone reductase subunit F.